A 122-amino-acid polypeptide reads, in one-letter code: Small ribosomal subunit protein uS12c (122 aa).

Belongs to the universal ribosomal protein uS12 family. In terms of assembly, part of the 30S ribosomal subunit.

The protein localises to the plastid. It is found in the chloroplast. With S4 and S5 plays an important role in translational accuracy. Located at the interface of the 30S and 50S subunits. This Mesostigma viride (Green alga) protein is Small ribosomal subunit protein uS12c (rps12).